Reading from the N-terminus, the 175-residue chain is Ribulose bisphosphate carboxylase small subunit, chloroplastic 2 (175 aa).

The transit peptide at 1 to 46 (MAPAVMASSATTVAPFQGLKSTAGLPISCRSGSTGLSSVSNGGRIR) directs the protein to the chloroplast.

Belongs to the RuBisCO small chain family. As to quaternary structure, heterohexadecamer of 8 large and 8 small subunits.

Its subcellular location is the plastid. The protein localises to the chloroplast. Its function is as follows. RuBisCO catalyzes two reactions: the carboxylation of D-ribulose 1,5-bisphosphate, the primary event in carbon dioxide fixation, as well as the oxidative fragmentation of the pentose substrate. Both reactions occur simultaneously and in competition at the same active site. Although the small subunit is not catalytic it is essential for maximal activity. This Triticum aestivum (Wheat) protein is Ribulose bisphosphate carboxylase small subunit, chloroplastic 2.